Reading from the N-terminus, the 252-residue chain is Protein BTG3 (252 aa).

The tract at residues 138 to 162 (VTSDYHSGSSSSDEDTSKEVEVKPS) is disordered.

It belongs to the BTG family. In terms of tissue distribution, highly expressed in the brain.

Overexpression impairs serum-induced cell cycle progression from the G0/G1 to S phase. The sequence is that of Protein BTG3 from Rattus norvegicus (Rat).